The following is a 493-amino-acid chain: Catalase A (493 aa).

The segment at 1 to 24 (MKRKLTGLFGAPVSDRENSMTAGP) is disordered. Residues histidine 53 and asparagine 126 contribute to the active site. Tyrosine 336 contacts heme.

It belongs to the catalase family. In terms of assembly, homodimer. Requires heme as cofactor.

The enzyme catalyses 2 H2O2 = O2 + 2 H2O. Decomposes hydrogen peroxide into water and oxygen; serves to protect cells from the toxic effects of hydrogen peroxide. The protein is Catalase A (katA) of Staphylococcus xylosus.